We begin with the raw amino-acid sequence, 710 residues long: Mitochondrial intermediate peptidase (710 aa).

The transit peptide at 1-33 directs the protein to the mitochondrion; that stretch reads MLLAAGTRYAYRLCGRRAAAALQGRAGRSCARS. The residue at position 124 (lysine 124) is an N6-acetyllysine. Histidine 492 serves as a coordination point for Zn(2+). Glutamate 493 is a catalytic residue. Zn(2+) contacts are provided by histidine 496 and histidine 499.

The protein belongs to the peptidase M3 family. In terms of assembly, monomer. The cofactor is Zn(2+).

It is found in the mitochondrion matrix. The catalysed reaction is Release of an N-terminal octapeptide as second stage of processing of some proteins imported into the mitochondrion.. Activity is divalent cation-dependent. It is stimulated by manganese, magnesium or calcium ions and reversibly inhibited by zinc, cobalt and iron. Its function is as follows. Cleaves proteins, imported into the mitochondrion, to their mature size. The chain is Mitochondrial intermediate peptidase (Mipep) from Rattus norvegicus (Rat).